The chain runs to 111 residues: MAVKIRLARGGAKKRPFYRVVVANATAPRDGDFLEKVGTYNPMLASDNSERVVLKKDRIEYWLGTGAKPTERVAKFIEQAGVTLPEKVKKEMEVKAKNRKVRPSKKEAKEA.

This sequence belongs to the bacterial ribosomal protein bS16 family.

This chain is Small ribosomal subunit protein bS16, found in Rickettsia felis (strain ATCC VR-1525 / URRWXCal2) (Rickettsia azadi).